We begin with the raw amino-acid sequence, 312 residues long: Tumor necrosis factor receptor type 1-associated DEATH domain protein (312 aa).

The Nuclear export signal signature appears at 147–163 (LRDEELTELENALRNLT). The disordered stretch occupies residues 166–200 (SAGGQGSDVQGTPAPLQSLAPSPPEEKPPPPQPGQ). Residues 215 to 305 (NLQDQQKFAR…SLAEDLLGLA (91 aa)) enclose the Death domain. The segment at 222 to 289 (FARSVGLKWR…ATLQRLVEAL (68 aa)) is interaction with KRT14 and KRT18. The Nuclear localization signal signature appears at 231-244 (RKVGRSLQRSCRAL).

Stimulation of TNF-alpha receptor TNFRSF1A leads to the formation of two distinct signaling complexes. Plasma membrane-bound complex I is composed of TNFRSF1A, TRADD, RIPK1, TRAF2 and BIRC2/c-IAP1 or BIRC3 which interacts with CHUCK/IKK-alpha, IKBKB/IKK-beta and IKBKG/IKK-gamma promoting cell survival. Subsequently, TRADD, RIPK1 and TRAF2 dissociate from TNFRSF1A and form cytoplasmic complex II with FADD and caspase CASP8 promoting cell apoptosis. Within complex I, interacts with TNFRSF1A/TNFR1, TRAF2 and kinase RIPK1. Within complex I, interacts with TRPC4AP; the interaction promotes NF-kappa B activation. UXT1 associates with complex I; the interaction prevents the formation of complex II. Within complex I Interacts with scaffold protein DAB2IP. Interacts with autophagy receptor SQSTM1. Interacts with E3 ligase TRIP12. Interacts with kinase HIPK2. Interacts with keratin KRT14. Interacts with keratin KRT18. Interacts with keratins KRT16 and KRT17. Interacts with FADD. Interacts with TOMM70. Interacts with TMC8; the interaction impairs the formation of complex I and facilites complex II formation.

The protein localises to the nucleus. The protein resides in the cytoplasm. Its subcellular location is the cytoskeleton. Adapter molecule for TNFRSF1A/TNFR1 that specifically associates with the cytoplasmic domain of activated TNFRSF1A/TNFR1 mediating its interaction with FADD. Overexpression of TRADD leads to two major TNF-induced responses, apoptosis and activation of NF-kappa-B. The nuclear form acts as a tumor suppressor by preventing ubiquitination and degradation of isoform p19ARF/ARF of CDKN2A by TRIP12: acts by interacting with TRIP12, leading to disrupt interaction between TRIP12 and isoform p19ARF/ARF of CDKN2A. The chain is Tumor necrosis factor receptor type 1-associated DEATH domain protein from Bos taurus (Bovine).